The following is a 148-amino-acid chain: Cofilin/actin-depolymerizing factor homolog (148 aa).

The ADF-H domain maps to 4–143 (GVTVSDVCKT…SREAVEEKLR (140 aa)). The short motif at 19–23 (KKDKK) is the Nuclear localization signal element.

Belongs to the actin-binding proteins ADF family. Phosphorylated in vitro by protein kinase LIMK1. Phosphorylation is required for inactivation of tsr and for cell proliferation and axon growth. Phosphorylation is negatively regulated by the panthothenate kinase fbl which catalyzes the first step in the conversion of panthothenic acid to coenzyme A. In terms of processing, dephosphorylated by protein phosphatase ssh which activates tsr.

It localises to the cytoplasm. Its subcellular location is the cytoskeleton. The protein resides in the nucleus matrix. Exhibits F-actin depolymerizing activity and regulates actin cytoskeleton dynamics. Required for cytokinesis in both mitotic and meiotic cells and for aster migration and separation. Promotes cell motility during ovary development and oogenesis. During larval development, required for the cell rearrangement needed for formation of terminal filaments which are stacks of somatic cells that are important for the initiation of ovarioles. Also required for border cell migration during oogenesis. During border cell migration, required for actin turnover and lamellipodial protrusion. Required for the establishment of planar cell polarity (PCP) where cells adopt a uniform orientation within the plane of an epithelium. During establishment of PCP, required for the redistribution of the PCP core proteins fz and stan/fmi to the proximodistal cell boundary. During pupal development, required for elongation of the retinal cell body and for rhabdomere morphogenesis. Required for mushroom body neuroblast proliferation and axon growth. Plays a role in the positive regulation of protein secretion. Plays a role in the regulation of nuclear localization of actin. Required for the maintenance of epithelial integrity by controlling cell junctions and is also necessary for cell survival and tissue growth through regulation of JNK and yki signaling. In Drosophila melanogaster (Fruit fly), this protein is Cofilin/actin-depolymerizing factor homolog.